The chain runs to 309 residues: Homoserine O-succinyltransferase (309 aa).

Cysteine 142 serves as the catalytic Acyl-thioester intermediate. Lysine 163 and serine 192 together coordinate substrate. The active-site Proton acceptor is histidine 235. The active site involves glutamate 237. Arginine 249 is a binding site for substrate.

It belongs to the MetA family.

It is found in the cytoplasm. The catalysed reaction is L-homoserine + succinyl-CoA = O-succinyl-L-homoserine + CoA. Its pathway is amino-acid biosynthesis; L-methionine biosynthesis via de novo pathway; O-succinyl-L-homoserine from L-homoserine: step 1/1. In terms of biological role, transfers a succinyl group from succinyl-CoA to L-homoserine, forming succinyl-L-homoserine. This Enterobacter sp. (strain 638) protein is Homoserine O-succinyltransferase.